The chain runs to 597 residues: Kelch-like protein 21 (597 aa).

In terms of domain architecture, BTB spans 35–103; that stretch reads LDVTLEAAGG…SYTGRVAVSG (69 aa). The region spanning 138 to 239 is the BACK domain; it reads CLDMQDFAEA…RRFYLLAHVE (102 aa). 6 Kelch repeats span residues 287–335, 336–382, 384–422, 423–470, 472–512, and 513–560; these read ILVL…ALGN, DIYV…VLDG, LYVV…ACRG, RLYA…TLNG, MYFV…VLGG, and KLYV…SIFR. A disordered region spans residues 570-597; sequence GRGFELDSGSDDMDPGRPRPPRDPDELH. The span at 583–597 shows a compositional bias: basic and acidic residues; that stretch reads DPGRPRPPRDPDELH.

As to quaternary structure, component of the BCR(KLHL21) E3 ubiquitin ligase complex, at least composed of CUL3, KLHL21 and RBX1.

The protein localises to the cytoplasm. Its subcellular location is the cytoskeleton. It is found in the spindle. It participates in protein modification; protein ubiquitination. Functionally, substrate-specific adapter of a BCR (BTB-CUL3-RBX1) E3 ubiquitin-protein ligase complex required for efficient chromosome alignment and cytokinesis. The BCR(KLHL21) E3 ubiquitin ligase complex regulates localization of the chromosomal passenger complex (CPC) from chromosomes to the spindle midzone in anaphase and mediates the ubiquitination of AURKB. Ubiquitination of AURKB by BCR(KLHL21) E3 ubiquitin ligase complex may not lead to its degradation by the proteasome. This is Kelch-like protein 21 (KLHL21) from Homo sapiens (Human).